The primary structure comprises 206 residues: Large ribosomal subunit protein uL4 (206 aa).

It belongs to the universal ribosomal protein uL4 family. Part of the 50S ribosomal subunit.

Functionally, one of the primary rRNA binding proteins, this protein initially binds near the 5'-end of the 23S rRNA. It is important during the early stages of 50S assembly. It makes multiple contacts with different domains of the 23S rRNA in the assembled 50S subunit and ribosome. Its function is as follows. Forms part of the polypeptide exit tunnel. The protein is Large ribosomal subunit protein uL4 of Methylorubrum populi (strain ATCC BAA-705 / NCIMB 13946 / BJ001) (Methylobacterium populi).